The sequence spans 82 residues: Beta-insect depressant toxin LqqIT2 (82 aa).

An N-terminal signal peptide occupies residues 1 to 21; that stretch reads MKLLLLLIVSASMLIESLVNA. Positions 22-82 constitute an LCN-type CS-alpha/beta domain; that stretch reads DGYIRKRDGC…TWKSETNTCG (61 aa). 4 cysteine pairs are disulfide-bonded: C31-C81, C35-C56, C42-C63, and C46-C65.

The protein belongs to the long (4 C-C) scorpion toxin superfamily. Sodium channel inhibitor family. Beta subfamily. Expressed by the venom gland.

Its subcellular location is the secreted. In terms of biological role, depressant insect beta-toxins cause a transient contraction paralysis followed by a slow flaccid paralysis. They bind voltage-independently at site-4 of sodium channels and shift the voltage of activation toward more negative potentials thereby affecting sodium channel activation and promoting spontaneous and repetitive firing. Aside from typical beta-toxin effects, this toxin also affects the inactivation process and ion selectivity of the insect voltage-gated sodium channel. This toxin is active only on insects. Is active on the insect voltage-gated sodium channel para. In vivo, when injected intraperitoneally, it exhibits analgesic activity, increasing hot plate and tail flick withdrawal latencies in a dose-dependent fashion. This phenomenon might be partly due to an inhibitory mechanism activated by noxious stimuli. This is Beta-insect depressant toxin LqqIT2 from Leiurus quinquestriatus quinquestriatus (Egyptian scorpion).